We begin with the raw amino-acid sequence, 120 residues long: Spermidine export protein MdtJ (120 aa).

The next 4 helical transmembrane spans lie at 1–21 (MFYW…TLSM), 31–51 (AGFI…SFAV), 54–74 (IALG…ITIF), and 81–101 (EALS…IVLI).

The protein belongs to the drug/metabolite transporter (DMT) superfamily. Small multidrug resistance (SMR) (TC 2.A.7.1) family. MdtJ subfamily. Forms a complex with MdtI.

It is found in the cell inner membrane. Catalyzes the excretion of spermidine. In Salmonella choleraesuis (strain SC-B67), this protein is Spermidine export protein MdtJ.